Here is a 292-residue protein sequence, read N- to C-terminus: Protein/nucleic acid deglycase HchA (292 aa).

Residues 1–12 (MSQDVNELSKQP) show a composition bias toward polar residues. Residues 1–23 (MSQDVNELSKQPTPDKAEDNAFF) form a disordered region. Cysteine 190 serves as the catalytic Nucleophile.

Belongs to the peptidase C56 family. HchA subfamily.

The protein resides in the cytoplasm. It carries out the reaction N(omega)-(1-hydroxy-2-oxopropyl)-L-arginyl-[protein] + H2O = lactate + L-arginyl-[protein] + H(+). The enzyme catalyses N(6)-(1-hydroxy-2-oxopropyl)-L-lysyl-[protein] + H2O = lactate + L-lysyl-[protein] + H(+). It catalyses the reaction S-(1-hydroxy-2-oxopropyl)-L-cysteinyl-[protein] + H2O = lactate + L-cysteinyl-[protein] + H(+). The catalysed reaction is N(omega)-(1-hydroxy-2-oxoethyl)-L-arginyl-[protein] + H2O = L-arginyl-[protein] + glycolate + H(+). It carries out the reaction N(6)-(1-hydroxy-2-oxoethyl)-L-lysyl-[protein] + H2O = glycolate + L-lysyl-[protein] + H(+). The enzyme catalyses S-(1-hydroxy-2-oxoethyl)-L-cysteinyl-[protein] + H2O = glycolate + L-cysteinyl-[protein] + H(+). It catalyses the reaction N(2)-(1-hydroxy-2-oxopropyl)-dGTP + H2O = lactate + dGTP + H(+). The catalysed reaction is N(2)-(1-hydroxy-2-oxopropyl)-GTP + H2O = lactate + GTP + H(+). It carries out the reaction N(2)-(1-hydroxy-2-oxopropyl)-GDP + H2O = lactate + GDP + H(+). The enzyme catalyses N(2)-(1-hydroxy-2-oxopropyl)-GMP + H2O = lactate + GMP + H(+). It catalyses the reaction N(2)-(1-hydroxy-2-oxoethyl)-dGTP + H2O = dGTP + glycolate + H(+). The catalysed reaction is N(2)-(1-hydroxy-2-oxoethyl)-GTP + H2O = glycolate + GTP + H(+). It carries out the reaction N(2)-(1-hydroxy-2-oxoethyl)-GDP + H2O = glycolate + GDP + H(+). The enzyme catalyses N(2)-(1-hydroxy-2-oxoethyl)-GMP + H2O = glycolate + GMP + H(+). It catalyses the reaction an N(2)-(1-hydroxy-2-oxopropyl)-guanosine in RNA + H2O = a guanosine in RNA + lactate + H(+). The catalysed reaction is an N(2)-(1-hydroxy-2-oxopropyl)-2'-deoxyguanosine in DNA + H2O = a 2'-deoxyguanosine in DNA + lactate + H(+). It carries out the reaction an N(2)-(1-hydroxy-2-oxoethyl)-guanosine in RNA + H2O = a guanosine in RNA + glycolate + H(+). The enzyme catalyses an N(2)-(1-hydroxy-2-oxoethyl)-2'-deoxyguanosine in DNA + H2O = a 2'-deoxyguanosine in DNA + glycolate + H(+). Functionally, protein and nucleotide deglycase that catalyzes the deglycation of the Maillard adducts formed between amino groups of proteins or nucleotides and reactive carbonyl groups of glyoxals. Thus, functions as a protein deglycase that repairs methylglyoxal- and glyoxal-glycated proteins, and releases repaired proteins and lactate or glycolate, respectively. Deglycates cysteine, arginine and lysine residues in proteins, and thus reactivates these proteins by reversing glycation by glyoxals. Acts on early glycation intermediates (hemithioacetals and aminocarbinols), preventing the formation of Schiff bases and advanced glycation endproducts (AGE). Also functions as a nucleotide deglycase able to repair glycated guanine in the free nucleotide pool (GTP, GDP, GMP, dGTP) and in DNA and RNA. Is thus involved in a major nucleotide repair system named guanine glycation repair (GG repair), dedicated to reversing methylglyoxal and glyoxal damage via nucleotide sanitization and direct nucleic acid repair. Plays an important role in protecting cells from carbonyl stress. The polypeptide is Protein/nucleic acid deglycase HchA (Staphylococcus aureus (strain Mu3 / ATCC 700698)).